A 340-amino-acid chain; its full sequence is MQELIEKIRQETANFEITDKDSAEAFRLKFLVRKGSIPQLFEQMKTVSKEDKPAVGKLLNELKLFADGKFKEAMEHIAANELAADDLADLTLPGRTHFLGAEHPVQKVLGDMKRIFQKMGFSTATGPEIERDAYNFTLLNFAPDHPARDMQDTFFIKKEADAEDVVLRTHTSPVQIRVMLEQAPPIRVICPGKVFRNEAVSARSYCVFHQLEGLYVDKGVTFADLKSTIYSFARQMFGSDVKMKFRPSYFPFTEPSAEVDITCYLCGGKGCRVCKHTGWLEILGCGMVHPNVLRNCGIDPEIYSGYAFGMGIERTALLRYNIDDIRLFFENDLRMLSQFE.

Residue Glu254 coordinates Mg(2+).

The protein belongs to the class-II aminoacyl-tRNA synthetase family. Phe-tRNA synthetase alpha subunit type 1 subfamily. In terms of assembly, tetramer of two alpha and two beta subunits. Mg(2+) serves as cofactor.

The protein localises to the cytoplasm. The enzyme catalyses tRNA(Phe) + L-phenylalanine + ATP = L-phenylalanyl-tRNA(Phe) + AMP + diphosphate + H(+). This Chloroherpeton thalassium (strain ATCC 35110 / GB-78) protein is Phenylalanine--tRNA ligase alpha subunit.